Consider the following 237-residue polypeptide: CDP-diacylglycerol--serine O-phosphatidyltransferase (237 aa).

8 helical membrane-spanning segments follow: residues 3–23 (INPL…LGMM), 25–45 (IFYA…ASLI), 73–93 (VVAF…YNFG), 95–115 (IGMA…ARFN), 124–144 (YSFI…CVLL), 150–170 (FLEG…GVLM), 184–204 (WNLK…VRPL), and 207–227 (LSVF…FLMV).

It belongs to the CDP-alcohol phosphatidyltransferase class-I family.

The protein resides in the cell membrane. It carries out the reaction a CDP-1,2-diacyl-sn-glycerol + L-serine = a 1,2-diacyl-sn-glycero-3-phospho-L-serine + CMP + H(+). The sequence is that of CDP-diacylglycerol--serine O-phosphatidyltransferase (pssA) from Helicobacter pylori (strain J99 / ATCC 700824) (Campylobacter pylori J99).